The primary structure comprises 413 residues: CCA-adding enzyme (413 aa).

ATP-binding residues include serine 42 and lysine 45. CTP contacts are provided by serine 42 and lysine 45. Positions 54, 56, and 107 each coordinate Mg(2+). ATP is bound by residues histidine 130, lysine 150, and tyrosine 159. 3 residues coordinate CTP: histidine 130, lysine 150, and tyrosine 159.

This sequence belongs to the tRNA nucleotidyltransferase/poly(A) polymerase family. Archaeal CCA-adding enzyme subfamily. Homodimer. Requires Mg(2+) as cofactor.

It carries out the reaction a tRNA precursor + 2 CTP + ATP = a tRNA with a 3' CCA end + 3 diphosphate. The enzyme catalyses a tRNA with a 3' CCA end + 2 CTP + ATP = a tRNA with a 3' CCACCA end + 3 diphosphate. Functionally, catalyzes the addition and repair of the essential 3'-terminal CCA sequence in tRNAs without using a nucleic acid template. Adds these three nucleotides in the order of C, C, and A to the tRNA nucleotide-73, using CTP and ATP as substrates and producing inorganic pyrophosphate. tRNA 3'-terminal CCA addition is required both for tRNA processing and repair. Also involved in tRNA surveillance by mediating tandem CCA addition to generate a CCACCA at the 3' terminus of unstable tRNAs. While stable tRNAs receive only 3'-terminal CCA, unstable tRNAs are marked with CCACCA and rapidly degraded. The chain is CCA-adding enzyme from Sulfurisphaera tokodaii (strain DSM 16993 / JCM 10545 / NBRC 100140 / 7) (Sulfolobus tokodaii).